The primary structure comprises 354 residues: Biotin synthase (354 aa).

The Radical SAM core domain occupies 41-265 (NEVQISRLLS…LMPHSRVRLS (225 aa)). The [4Fe-4S] cluster site is built by Cys56, Cys60, and Cys63. 4 residues coordinate [2Fe-2S] cluster: Cys100, Cys131, Cys191, and Arg263.

Belongs to the radical SAM superfamily. Biotin synthase family. Homodimer. The cofactor is [4Fe-4S] cluster. [2Fe-2S] cluster serves as cofactor.

It catalyses the reaction (4R,5S)-dethiobiotin + (sulfur carrier)-SH + 2 reduced [2Fe-2S]-[ferredoxin] + 2 S-adenosyl-L-methionine = (sulfur carrier)-H + biotin + 2 5'-deoxyadenosine + 2 L-methionine + 2 oxidized [2Fe-2S]-[ferredoxin]. It participates in cofactor biosynthesis; biotin biosynthesis; biotin from 7,8-diaminononanoate: step 2/2. In terms of biological role, catalyzes the conversion of dethiobiotin (DTB) to biotin by the insertion of a sulfur atom into dethiobiotin via a radical-based mechanism. The sequence is that of Biotin synthase from Shewanella woodyi (strain ATCC 51908 / MS32).